The following is a 453-amino-acid chain: Plasticin (453 aa).

The interval 1 to 51 is head; the sequence is MSHSTFSHLFSPHFGAPVYSPVSSRIGGRYVSSSVPTRSVDFRSRSSAPAP. The tract at residues 71–112 is coil 1A; it reads FATRSNEKRELQELNDRFASFIEKVRHLEQQNSKLILELGQY. The 314-residue stretch at 77-390 folds into the IF rod domain; the sequence is EKRELQELND…KLLEGEENRI (314 aa). Residues 113 to 126 are linker 1; the sequence is KDQHQGSTGRINEL. A coil 1B region spans residues 127–222; it reads CQQEMRELRR…KMHDEEIQDV (96 aa). Residues 223 to 245 are linker 12; it reads QVSVQSQQMKMEVMETSSRPDLT. The interval 246 to 391 is coil 2; it reads GALRDIRAQY…LLEGEENRIV (146 aa). The segment at 392-453 is tail; the sequence is VPIMKMPSMS…KKDSHGQGKD (62 aa). Positions 421-453 are disordered; the sequence is IKTVETRDGEVVKESTKEKGRDEKKDSHGQGKD. Basic and acidic residues predominate over residues 424-453; it reads VETRDGEVVKESTKEKGRDEKKDSHGQGKD.

The protein belongs to the intermediate filament family. As to expression, optic nerve.

In terms of biological role, type III neurofilament. The sequence is that of Plasticin from Carassius auratus (Goldfish).